The primary structure comprises 186 residues: Ribosome-recycling factor (186 aa).

This sequence belongs to the RRF family.

The protein localises to the cytoplasm. Responsible for the release of ribosomes from messenger RNA at the termination of protein biosynthesis. May increase the efficiency of translation by recycling ribosomes from one round of translation to another. This chain is Ribosome-recycling factor, found in Rickettsia conorii (strain ATCC VR-613 / Malish 7).